The chain runs to 50 residues: Insulin (50 aa).

3 cysteine pairs are disulfide-bonded: cysteine 7–cysteine 36, cysteine 19–cysteine 49, and cysteine 35–cysteine 40.

It belongs to the insulin family. Heterodimer of a B chain and an A chain linked by two disulfide bonds.

Its subcellular location is the secreted. Its function is as follows. Insulin decreases blood glucose concentration. It increases cell permeability to monosaccharides, amino acids and fatty acids. It accelerates glycolysis, the pentose phosphate cycle, and glycogen synthesis in liver. This chain is Insulin (INS), found in Proechimys guairae (Guaira spiny rat).